A 76-amino-acid polypeptide reads, in one-letter code: Small ribosomal subunit protein uS17 (76 aa).

The protein belongs to the universal ribosomal protein uS17 family. As to quaternary structure, part of the 30S ribosomal subunit.

One of the primary rRNA binding proteins, it binds specifically to the 5'-end of 16S ribosomal RNA. The protein is Small ribosomal subunit protein uS17 of Dinoroseobacter shibae (strain DSM 16493 / NCIMB 14021 / DFL 12).